Here is a 465-residue protein sequence, read N- to C-terminus: Serine/threonine-protein kinase AtPK1/AtPK6 (465 aa).

The LVxCxE motif motif lies at 91 to 96; that stretch reads LVECLE. One can recognise a Protein kinase domain in the interval 134 to 389; the sequence is FEVMKVVGKG…AEEIKQHKWF (256 aa). ATP-binding positions include 140–148 and Lys163; that span reads VGKGAFGKV. Asp257 serves as the catalytic Proton acceptor. Positions 275 to 301 are activation loop; it reads DFGLAKEFEENTRSNSMCGTTEYMAPE. Phosphoserine; by PDPK1 is present on Ser290. One can recognise an AGC-kinase C-terminal domain in the interval 390–460; the sequence is KGINWKKLEA…VRPPPSFLHQ (71 aa). Phosphothreonine; by TOR is present on Thr449.

Belongs to the protein kinase superfamily. AGC Ser/Thr protein kinase family. S6 kinase subfamily. In terms of assembly, interacts with RAPTOR1. Interacts with RBR1-E2FB complex through its LVxCxE motif. Interacts with TAP46. Binds to MRF1. Post-translationally, undergoes serine-specific autophosphorylation. Phosphorylated at Thr-449 by TOR. In terms of tissue distribution, expressed in all tissues.

The protein localises to the cytoplasm. Its subcellular location is the nucleus. The enzyme catalyses L-seryl-[protein] + ATP = O-phospho-L-seryl-[protein] + ADP + H(+). It carries out the reaction L-threonyl-[protein] + ATP = O-phospho-L-threonyl-[protein] + ADP + H(+). With respect to regulation, activated by PDK1. Repressed during osmotic stress. Its function is as follows. Downstream effector of TOR signaling pathway involved in osmotic stress response. Could be involved in the control of plant growth and development. Phosphorylates the ribosomal proteins P14, P16 and S6. Functions as a repressor of cell proliferation and required for maintenance of chromosome stability and ploidy levels through the RBR1-E2F pathway. Mediates the phosphorylation of MRFs (e.g. MRF1). This Arabidopsis thaliana (Mouse-ear cress) protein is Serine/threonine-protein kinase AtPK1/AtPK6.